The sequence spans 117 residues: UPF0342 protein BLi01058/BL02870 (117 aa).

Belongs to the UPF0342 family.

The protein is UPF0342 protein BLi01058/BL02870 of Bacillus licheniformis (strain ATCC 14580 / DSM 13 / JCM 2505 / CCUG 7422 / NBRC 12200 / NCIMB 9375 / NCTC 10341 / NRRL NRS-1264 / Gibson 46).